A 75-amino-acid chain; its full sequence is CDC42 small effector protein 1 (75 aa).

2 S-palmitoyl cysteine lipidation sites follow: Cys10 and Cys11. In terms of domain architecture, CRIB spans 30-43 (IGEPTNFVHLTHIG). The segment at 45–75 (GEMADGMQPSGPIKEQMRSKVPHANGRNSLL) is disordered.

It belongs to the CDC42SE/SPEC family.

It is found in the cytoplasm. Its subcellular location is the cytoskeleton. It localises to the cell membrane. Its function is as follows. Probably involved in the organization of the actin cytoskeleton by acting downstream of CDC42, inducing actin filament assembly. The chain is CDC42 small effector protein 1 (cdc42se1) from Danio rerio (Zebrafish).